Here is a 420-residue protein sequence, read N- to C-terminus: Tryptophan--tRNA ligase (420 aa).

The short motif at 72-80 (PSGLPHFGH) is the 'HIGH' region element. A 'KMSKS' region motif is present at residues 308 to 312 (KMSSS).

The protein belongs to the class-I aminoacyl-tRNA synthetase family.

The protein resides in the cytoplasm. It carries out the reaction tRNA(Trp) + L-tryptophan + ATP = L-tryptophyl-tRNA(Trp) + AMP + diphosphate + H(+). The polypeptide is Tryptophan--tRNA ligase (Archaeoglobus fulgidus (strain ATCC 49558 / DSM 4304 / JCM 9628 / NBRC 100126 / VC-16)).